A 163-amino-acid polypeptide reads, in one-letter code: MRAVIQKTVGAKVDVVSENGTETCGKIDGGFVVLLGVTHSDIEKDARYVADKIAHLRVFEDGEGKLNLSLKDVGGSVLLVSQFTLYADAASGRRPSFSKAAPAEQAKRLYLHTAELLRGHGIHVETGRFRTHMQVSLCNDGPVTILLDSFMTRISPKMKVVPD.

Positions glycine 141 to proline 142 match the Gly-cisPro motif, important for rejection of L-amino acids motif.

It belongs to the DTD family. Homodimer.

It localises to the cytoplasm. It catalyses the reaction glycyl-tRNA(Ala) + H2O = tRNA(Ala) + glycine + H(+). The enzyme catalyses a D-aminoacyl-tRNA + H2O = a tRNA + a D-alpha-amino acid + H(+). An aminoacyl-tRNA editing enzyme that deacylates mischarged D-aminoacyl-tRNAs. Also deacylates mischarged glycyl-tRNA(Ala), protecting cells against glycine mischarging by AlaRS. Acts via tRNA-based rather than protein-based catalysis; rejects L-amino acids rather than detecting D-amino acids in the active site. By recycling D-aminoacyl-tRNA to D-amino acids and free tRNA molecules, this enzyme counteracts the toxicity associated with the formation of D-aminoacyl-tRNA entities in vivo and helps enforce protein L-homochirality. The sequence is that of D-aminoacyl-tRNA deacylase from Neisseria meningitidis serogroup A / serotype 4A (strain DSM 15465 / Z2491).